An 822-amino-acid polypeptide reads, in one-letter code: MAQRFQLNSQTLPTADPLKRVSLIPRSAEQRLADNAGERRPLAPRSHEDNPFGGHTDDHHVAAPADHNKVMDHNSENLGSIVPKTAHYPHPSEEILDANIRHSMVPKSLGPNSLGGRFGPGKKQAFHRNGRPMFSLSDDRVMADRVLKTHSPDMIFFDVTSLLSVVNDIFKSHVPSIDSSAPKPSLVFKDYADHTSFETFADLIDQISCEIDCKCLHGGESHGMMTSGLHLDSRNTTTFSVLSLVSKYRWDAKLVLVLSALAVKYGVFLLLAETHATNQLTKSLALIKQLPSIFSRQNALHQRLDKTRILMQDMVDLTTTIIDIYQLPPNHITAAFTDHIPTAVYWIVRCVLICVSHISGASGFKQDQIMSFMEVSEIHENSERLRKINAYLLEQFKKSKMTIEEGIIEEEYQELIQTFTTIIHVDVVPPLLRLLRPIDFLYHGAGVSKRRVGINVLTQKHVLLLISDLENIEKELYILESLYTEAWQQSFEILWVPVQDFWTEADDAKFEALHMNMRWYVLGEPRKLRRAAIRFVREWWGFKNRPILVALDPKGQVMSTNAFPMVWIWQPFAHPFTTARERDLWSEQEWNLEFLIDGTDPHSLNQLVDGKYICLYGGEDMQWIKNFTSLWRNVAKAANIQLEMVYVGKRNPKNGIQPIINTIREENLSHTLPDLFQIWFFWTRVESMWESKQRMLKAHGIKGREGFKEEEKDLVLQEVVAMLGYGGEGDGWGLVSKASDMMVRAKGNLFSRGLAEFNEWEVNIPTKGFLTALNDHLLMRLPPHHCTRFMLPETAGIIPNEVECTECRRTMEKYYLYQCCLE.

The segment at 25-62 (PRSAEQRLADNAGERRPLAPRSHEDNPFGGHTDDHHVA) is disordered. Positions 28 to 62 (AEQRLADNAGERRPLAPRSHEDNPFGGHTDDHHVA) are enriched in basic and acidic residues.

As to quaternary structure, can form homodimer. In terms of tissue distribution, expressed in phloem sieve elements.

In terms of biological role, scaffold protein required to form the phloem filament matrix in sieve elements. The polypeptide is Protein SIEVE ELEMENT OCCLUSION A (Arabidopsis thaliana (Mouse-ear cress)).